The primary structure comprises 238 residues: MHVISETLAYGHVPAFIMGSTLVRPSLNATAEENPASETRCLLRVLAGRTVDLPGGGTLHITCTKTYVIIGKYSKPGERLSLARLIGRAMTPGGARTFIILAMKEKRSTTLGYECGTGLHLLAPSMGTFLRTHGLSNRDLCLWRGNIYDMHMQRLMFWENIAQNTTETPCITSTLTCNLTEDSGEAALTTSDRPTLPTLTAQGRPTVSNIRGILKGSPRQQPVCHRVRFAEPTEGVLM.

Belongs to the varicellovirus ORF2 protein family. Post-translationally, phosphorylated by host.

It is found in the host membrane. The chain is Membrane protein 2 from Varicella-zoster virus (strain Dumas) (HHV-3).